We begin with the raw amino-acid sequence, 385 residues long: DNA replication and repair protein RecF (385 aa).

30–37 lines the ATP pocket; sequence GPNGYGKT.

The protein belongs to the RecF family.

It localises to the cytoplasm. The RecF protein is involved in DNA metabolism; it is required for DNA replication and normal SOS inducibility. RecF binds preferentially to single-stranded, linear DNA. It also seems to bind ATP. This is DNA replication and repair protein RecF from Mycobacterium bovis (strain ATCC BAA-935 / AF2122/97).